The primary structure comprises 312 residues: Malate dehydrogenase (312 aa).

NAD(+)-binding positions include 7-13 (GAAGGIG) and D34. Residues R81 and R87 each contribute to the substrate site. Residues N94 and 117-119 (ITN) each bind NAD(+). Substrate-binding residues include N119 and R153. The active-site Proton acceptor is H177. M227 contacts NAD(+).

The protein belongs to the LDH/MDH superfamily. MDH type 1 family. In terms of assembly, homodimer.

It catalyses the reaction (S)-malate + NAD(+) = oxaloacetate + NADH + H(+). Catalyzes the reversible oxidation of malate to oxaloacetate. The protein is Malate dehydrogenase of Edwardsiella ictaluri (strain 93-146).